The following is a 94-amino-acid chain: DASH complex subunit dad2 (94 aa).

Residues K18–E38 adopt a coiled-coil conformation. The segment at V72–V94 is disordered. The span at P76–E87 shows a compositional bias: polar residues.

The protein belongs to the DASH complex DAD2 family. In terms of assembly, component of the DASH complex consisting of ask1, dad1, dad2, dad3, dad4, dam1, duo1, dad5, spc19 and spc34, with a stoichiometry of one copy of each subunit per complex. Multiple DASH complexes oligomerize to form a ring that encircles spindle microtubules and organizes the rod-like NDC80 complexes of the outer kinetochore. DASH complex oligomerization strengthens microtubule attachments. On cytoplasmic microtubules, DASH complexes appear to form patches instead of rings.

It localises to the nucleus. The protein resides in the cytoplasm. The protein localises to the cytoskeleton. It is found in the spindle. Its subcellular location is the chromosome. It localises to the centromere. The protein resides in the kinetochore. Component of the DASH complex that connects microtubules with kinetochores and couples microtubule depolymerisation to chromosome movement; it is involved in retrieving kinetochores to the spindle poles before their re-orientation on the spindle in early mitosis and allows microtubule depolymerization to pull chromosomes apart and resist detachment during anaphase. Kinetochores, consisting of a centromere-associated inner segment and a microtubule-contacting outer segment, play a crucial role in chromosome segregation by mediating the physical connection between centromeric DNA and microtubules. Kinetochores also serve as an input point for the spindle assembly checkpoint, which delays anaphase until all chromosomes have bioriented on the mitotic spindle. The DASH complex mediates bipolar kinetochore-microtubule attachments and facilitates the formation of additional interactions between outer kinetochore components and spindle microtubules. During chromosome movement along the microtubule, it is required both for the sliding of kinetochores along the lateral side of the microtubule and also for microtubule end-on pulling on the kinetochore. Modulates cytoplasmic microtubule dynamics by tracking the plus-end of shortening microtubules and slowing their depolymerization. The protein is DASH complex subunit dad2 of Schizosaccharomyces pombe (strain 972 / ATCC 24843) (Fission yeast).